The sequence spans 142 residues: Large ribosomal subunit protein uL13 (142 aa).

Belongs to the universal ribosomal protein uL13 family. As to quaternary structure, part of the 50S ribosomal subunit.

In terms of biological role, this protein is one of the early assembly proteins of the 50S ribosomal subunit, although it is not seen to bind rRNA by itself. It is important during the early stages of 50S assembly. This is Large ribosomal subunit protein uL13 from Cupriavidus metallidurans (strain ATCC 43123 / DSM 2839 / NBRC 102507 / CH34) (Ralstonia metallidurans).